Reading from the N-terminus, the 214-residue chain is Octanoyltransferase (214 aa).

Residues 34–214 enclose the BPL/LPL catalytic domain; the sequence is GVQKELVWLL…KFNEIFSNFN (181 aa). Substrate-binding positions include 73–80, 145–147, and 158–160; these read RGGKYTYH, AFG, and GVS. Cysteine 176 serves as the catalytic Acyl-thioester intermediate.

Belongs to the LipB family.

Its subcellular location is the cytoplasm. It carries out the reaction octanoyl-[ACP] + L-lysyl-[protein] = N(6)-octanoyl-L-lysyl-[protein] + holo-[ACP] + H(+). It participates in protein modification; protein lipoylation via endogenous pathway; protein N(6)-(lipoyl)lysine from octanoyl-[acyl-carrier-protein]: step 1/2. In terms of biological role, catalyzes the transfer of endogenously produced octanoic acid from octanoyl-acyl-carrier-protein onto the lipoyl domains of lipoate-dependent enzymes. Lipoyl-ACP can also act as a substrate although octanoyl-ACP is likely to be the physiological substrate. The chain is Octanoyltransferase from Ehrlichia chaffeensis (strain ATCC CRL-10679 / Arkansas).